A 524-amino-acid chain; its full sequence is Fusicoccadiene C-8 hydroxylase (524 aa).

A helical transmembrane segment spans residues 16–36 (LQLLCIGPLVYACVSFIIKIV). 2 N-linked (GlcNAc...) asparagine glycosylation sites follow: Asn-126 and Asn-344. Cys-465 is a heme binding site. Asn-496 carries N-linked (GlcNAc...) asparagine glycosylation.

This sequence belongs to the cytochrome P450 family. Heme is required as a cofactor.

Its subcellular location is the membrane. It participates in mycotoxin biosynthesis. Cytochrome P450 monooxygenase; part of the 2 gene clusters that mediate the biosynthesis of fusicoccins, diterpene glucosides that display phytohormone-like activity and function as potent activators of plasma membrane H(+)-ATPases in plants by modifying 14-3-3 proteins and cause the plant disease constriction canker. The first step in the pathway is performed by the fusicoccadiene synthase PaFS that possesses both prenyl transferase and terpene cyclase activity, converting isopentenyl diphosphate and dimethylallyl diphosphate into geranylgeranyl diphosphate (GGDP) and successively converting GGDP into fusicocca-2,10(14)-diene, a precursor for fusicoccin H. The second step is the oxidation at the C-8 position by the cytochrome P450 monooxygenase PaP450-2 to yield fusicocca-2,10(14)-diene-8-beta-ol. The cytochrome P450 monooxygenase PaP450-1 then catalyzes the hydroxylation at the C-16 position to produce fusicocca-2,10(14)-diene-8-beta,16-diol. The dioxygenase fc-dox then catalyzes the 16-oxydation of fusicocca-2,10(14)-diene-8-beta,16-diol to yield an aldehyde (8-beta-hydroxyfusicocca-1,10(14)-dien-16-al). The short-chain dehydrogenase/reductase fc-sdr catalyzes the reduction of the aldehyde to yield fusicocca-1,10(14)-diene-8-beta,16-diol. The next step is the hydroxylation at C-9 performed by the cytochrome P450 monooxygenase PaP450-3 that leads to fusicoccin H aglycon which is glycosylated to fusicoccin H by the O-glycosyltransferase PaGT. Hydroxylation at C-12 by the cytochrome P450 monooxygenase PaP450-4 leads then to the production of fusicoccin Q and is followed by methylation by the O-methyltransferase PaMT to yield fusicoccin P. Fusicoccin P is further converted to fusicoccin J via prenylation by the O-glucose prenyltransferase PaPT. Cytochrome P450 monooxygenase PaP450-5 then performs hydroxylation at C-19 to yield dideacetyl-fusicoccin A which is acetylated to 3'-O-deacetyl-fusicoccin A by the O-acetyltransferase PaAT-2. Finally, a another acetylation by the O-acetyltransferase PaAT-1 yields fusicoccin A. The sequence is that of Fusicoccadiene C-8 hydroxylase from Phomopsis amygdali (Fusicoccum amygdali).